Here is a 258-residue protein sequence, read N- to C-terminus: uncharacterized protein (258 aa).

A signal peptide spans 1–20 (MKCFQKLYIFILILIVLMAG). A lipid anchor (N-palmitoyl cysteine) is attached at Cys-21. Cys-21 carries the S-diacylglycerol cysteine lipid modification.

The protein belongs to the staphylococcal tandem lipoprotein family.

It localises to the cell membrane. This is an uncharacterized protein from Staphylococcus aureus (strain bovine RF122 / ET3-1).